Consider the following 894-residue polypeptide: Pentatricopeptide repeat-containing protein At1g19720 (894 aa).

18 PPR repeats span residues 80 to 110 (KRST…FGLF), 114 to 144 (DVFV…MRER), 145 to 179 (NLFT…GVLP), 180 to 214 (DDFL…GMSS), 215 to 245 (CLRV…MRER), 246 to 280 (DVIA…GISP), 281 to 315 (GLVT…GITA), 316 to 350 (DVFT…GVVP), 351 to 385 (NAVT…GFID), 386 to 416 (DVLV…VKNK), 417 to 451 (DVYT…NLRP), 452 to 486 (NIIT…GKVQ), 488 to 522 (NTAT…RFMP), 523 to 557 (NSVT…NLDA), 558 to 588 (IHAV…METK), 589 to 623 (DIIT…GITP), 624 to 659 (NRGT…HIIP), and 660 to 694 (ALEH…SETP). The type E motif stretch occupies residues 695 to 770 (IWESFLTGCR…PLGQSWIEVR (76 aa)). The tract at residues 771–801 (NLIHTFTTGDQSKLCTDVLYPLVEKMSRLDN) is type E(+) motif. The type DYW motif stretch occupies residues 803–894 (SDQYNGELWI…NGDCSCKDYW (92 aa)).

It belongs to the PPR family. PCMP-H subfamily.

In Arabidopsis thaliana (Mouse-ear cress), this protein is Pentatricopeptide repeat-containing protein At1g19720 (DYW7).